The sequence spans 309 residues: Elongation factor Ts (309 aa).

Positions 82-85 (TDFV) are involved in Mg(2+) ion dislocation from EF-Tu.

This sequence belongs to the EF-Ts family.

The protein resides in the cytoplasm. Functionally, associates with the EF-Tu.GDP complex and induces the exchange of GDP to GTP. It remains bound to the aminoacyl-tRNA.EF-Tu.GTP complex up to the GTP hydrolysis stage on the ribosome. In Rickettsia africae (strain ESF-5), this protein is Elongation factor Ts.